The chain runs to 556 residues: Urocanate hydratase (556 aa).

NAD(+) is bound by residues 52–53 (GG), Gln-130, 176–178 (GMG), Glu-196, Arg-201, 242–243 (NA), 263–267 (QTSAH), 273–274 (YL), and Tyr-322. The active site involves Cys-410. Gly-492 is a binding site for NAD(+).

Belongs to the urocanase family. The cofactor is NAD(+).

The protein resides in the cytoplasm. It catalyses the reaction 4-imidazolone-5-propanoate = trans-urocanate + H2O. It functions in the pathway amino-acid degradation; L-histidine degradation into L-glutamate; N-formimidoyl-L-glutamate from L-histidine: step 2/3. In terms of biological role, catalyzes the conversion of urocanate to 4-imidazolone-5-propionate. The protein is Urocanate hydratase of Acidiphilium cryptum (strain JF-5).